Consider the following 471-residue polypeptide: MSNSTLKVKTKSMPDSRLAVELEISAKQCKESYQQALSKLSKTANLPGFRKGKVPQAVLLQQVGAKRIQASAIEKLLEVVWPQALQQESIEPLCEPELIGGFEALLENFNPDSKLTLTLETDISPIPQLKSSKGLTVEAEKVVFDPKKIDELIEQSRKQLSTLIPVENRPAKKGDVAVVSFEGKFTDNNSPIEGGNSDSMDIELEKGQMIPGFVEGIIGMNINDEKTVECTFPKDYPQEDARNRKAKFDIKVKDLKTRELPKLDDDFAKQASDKDSLEELRKELEAKLKEDAHQRSIKNRQEALLKALVEQLEIDLPKTLIEIETRNLIEQTARNFAQQGIDVKSTFTPELINKLMDSSRPEAIENLRRQFAMQALRKEEGIEVPNKEVDKKFEEVKKELSKEKNIDFEKLKEAVLEDLLQDKVFTWLEENNTVIETLPKTKSLNGKPSTQGKTSQSKSKKTKTKVEKTTK.

Positions Gly-174–Pro-261 constitute a PPIase FKBP-type domain. Over residues Glu-436 to Gly-446 the composition is skewed to polar residues. The segment at Glu-436–Lys-471 is disordered. Low complexity predominate over residues Lys-447 to Ser-457.

Belongs to the FKBP-type PPIase family. Tig subfamily.

The protein resides in the cytoplasm. It carries out the reaction [protein]-peptidylproline (omega=180) = [protein]-peptidylproline (omega=0). Involved in protein export. Acts as a chaperone by maintaining the newly synthesized protein in an open conformation. Functions as a peptidyl-prolyl cis-trans isomerase. The protein is Trigger factor of Prochlorococcus marinus (strain MIT 9211).